The primary structure comprises 330 residues: Atypical chemokine receptor 1 (330 aa).

The Extracellular segment spans residues 1–57; it reads MGNCLYPVADDNSTKLAIKEDFLIDFPEDYYPDYNETDVEAAAPCHSCSLLNYSSLP. N-linked (GlcNAc...) asparagine glycans are attached at residues N12, N35, and N52. 2 disulfides stabilise this stretch: C45–C270 and C123–C189. A helical membrane pass occupies residues 58-78; sequence FFILVSILGILASGTILYALL. Residues 79–89 are Cytoplasmic-facing; that stretch reads RPLFRWQLYQD. A helical transmembrane segment spans residues 90-110; that stretch reads RSTLVQLAVGSALFSIVVPIL. The Extracellular segment spans residues 111–123; sequence ARGLSGALITSLC. A helical membrane pass occupies residues 124–147; it reads HLAHLVAYGSAFAQALLIGYHACL. At 148 to 160 the chain is on the cytoplasmic side; sequence GPQLGAGQVPGLR. A helical membrane pass occupies residues 161-181; that stretch reads LGVTVGLWGVAALLSLPVVLG. Residues 182 to 201 lie on the Extracellular side of the membrane; it reads SDTSQGLCTVTFSGEWETLR. A helical membrane pass occupies residues 202–222; the sequence is YIHAAACFAIFVLLPLGLLGT. The Cytoplasmic portion of the chain corresponds to 223–238; it reads KGLKTVLGRAPCPWVD. The helical transmembrane segment at 239–259 threads the bilayer; it reads VLWVWFIFWWPQGMTLGLDSL. The Extracellular segment spans residues 260–281; that stretch reads VRSKAIVVSTCPAQQALDMLLD. A helical membrane pass occupies residues 282-302; it reads VAEALAILHCVATPLLLAWVC. The Cytoplasmic portion of the chain corresponds to 303 to 330; the sequence is YQATHTSPPSLPLPTTQTSHLDTLGGKS.

Belongs to the G-protein coupled receptor 1 family. Atypical chemokine receptor subfamily.

Its subcellular location is the early endosome. The protein resides in the recycling endosome. It localises to the membrane. In terms of biological role, atypical chemokine receptor that controls chemokine levels and localization via high-affinity chemokine binding that is uncoupled from classic ligand-driven signal transduction cascades, resulting instead in chemokine sequestration, degradation, or transcytosis. Also known as interceptor (internalizing receptor) or chemokine-scavenging receptor or chemokine decoy receptor. Has a promiscuous chemokine-binding profile, interacting with inflammatory chemokines of both the CXC and the CC subfamilies but not with homeostatic chemokines. Acts as a receptor for chemokines including CCL2, CCL5, CCL7, CCL11, CCL13, CCL14, CCL17, CXCL5, CXCL6, IL8/CXCL8, CXCL11, GRO, RANTES, MCP-1 and TARC. May regulate chemokine bioavailability and, consequently, leukocyte recruitment through two distinct mechanisms: when expressed in endothelial cells, it sustains the abluminal to luminal transcytosis of tissue-derived chemokines and their subsequent presentation to circulating leukocytes; when expressed in erythrocytes, serves as blood reservoir of cognate chemokines but also as a chemokine sink, buffering potential surges in plasma chemokine levels. The polypeptide is Atypical chemokine receptor 1 (ACKR1) (Bos taurus (Bovine)).